We begin with the raw amino-acid sequence, 320 residues long: Protoheme IX farnesyltransferase 1 (320 aa).

A run of 9 helical transmembrane segments spans residues 34 to 54 (GIII…FASA), 58 to 78 (LTGL…AFVM), 112 to 132 (AMIL…LYSL), 135 to 155 (LTAF…TVWV), 160 to 180 (VWST…GYCA), 189 to 209 (AVLL…AIGI), 234 to 254 (IKMM…PFSL), 255 to 275 (GTGH…GIWI), and 299 to 319 (LIYF…MFLI).

Belongs to the UbiA prenyltransferase family. Protoheme IX farnesyltransferase subfamily. In terms of assembly, interacts with CtaA.

It is found in the cell membrane. It catalyses the reaction heme b + (2E,6E)-farnesyl diphosphate + H2O = Fe(II)-heme o + diphosphate. Its pathway is porphyrin-containing compound metabolism; heme O biosynthesis; heme O from protoheme: step 1/1. Converts heme B (protoheme IX) to heme O by substitution of the vinyl group on carbon 2 of heme B porphyrin ring with a hydroxyethyl farnesyl side group. This chain is Protoheme IX farnesyltransferase 1 (ctaB1), found in Bacillus subtilis (strain 168).